Here is an 87-residue protein sequence, read N- to C-terminus: Diazepam-binding inhibitor-like 5 (87 aa).

Positions 2 to 87 (SQVEFEMACA…VEELKKKEPC (86 aa)) constitute an ACB domain. Residues 29–33 (YSFYK), lysine 55, and tyrosine 74 contribute to the an acyl-CoA site.

Belongs to the ACBP family. Exclusively expressed in late spermatids and spermatozoa. Not found in epididymis, spleen, bone marrow, skin, liver, brain, heart, kidney, muscle.

It localises to the cytoplasm. Its function is as follows. May be involved in the energy metabolism of the mature sperm. In Mus musculus (Mouse), this protein is Diazepam-binding inhibitor-like 5 (Dbil5).